The chain runs to 294 residues: MFSGFVGPDDGEPTSDASETVQISSLALLKMLKHGRAGIPLEVMGLMLGEFVDEYTVKVVDVFAMPQSGTNVTVESVDPIFQMEMMSILKATGRHETVVGWYHSHPGFGCWLSTVDISTQQSFEKLCKRAVAVVVDPIQSVKGKVVIDAFRLIDNQLGVLGGEPRQVTSNIGYLKTPTLISIIHGLNKHYYSFNITCRKNDFEQKMLLNLHRKTWADNLKLGDVRSKREEALKLIESYGKAFEEEKNLAGKNPDMAKVGRIDYRRRLLEKCEESIMENTIYSLLYSIHRYIFTQ.

The MPN domain maps to 21 to 156 (VQISSLALLK…IDAFRLIDNQ (136 aa)). Positions 103, 105, and 116 each coordinate Zn(2+). Positions 103-116 (HSHPGFGCWLSTVD) match the JAMM motif motif.

It belongs to the peptidase M67A family. As to quaternary structure, the 26S proteasome consists of a 20S proteasome core and two 19S regulatory subunits. The 20S proteasome core is composed of 28 subunits that are arranged in four stacked rings, resulting in a barrel-shaped structure. The two end rings are each formed by seven alpha subunits, and the two central rings are each formed by seven beta subunits. The catalytic chamber with the active sites is on the inside of the barrel.

The protein localises to the cytoplasm. It is found in the nucleus. Its function is as follows. Acts as a regulatory subunit of the 26S proteasome which degrades poly-ubiquitinated proteins in the cytoplasm and in the nucleus. It is essential for the regulated turnover of proteins and for the removal of misfolded proteins. The proteasome is a multicatalytic proteinase complex that is characterized by its ability to cleave peptides with Arg, Phe, Tyr, Leu, and Glu adjacent to the leaving group at neutral or slightly basic pH. The polypeptide is 26S proteasome regulatory subunit RPN11 (RPN11) (Encephalitozoon cuniculi (strain GB-M1) (Microsporidian parasite)).